Consider the following 165-residue polypeptide: Endoribonuclease YbeY (165 aa).

Zn(2+) contacts are provided by His130, His134, and His140.

The protein belongs to the endoribonuclease YbeY family. It depends on Zn(2+) as a cofactor.

Its subcellular location is the cytoplasm. Functionally, single strand-specific metallo-endoribonuclease involved in late-stage 70S ribosome quality control and in maturation of the 3' terminus of the 16S rRNA. This Streptococcus thermophilus (strain CNRZ 1066) protein is Endoribonuclease YbeY.